The sequence spans 212 residues: Peptide methionine sulfoxide reductase MsrA (212 aa).

C52 is an active-site residue.

This sequence belongs to the MsrA Met sulfoxide reductase family.

It catalyses the reaction L-methionyl-[protein] + [thioredoxin]-disulfide + H2O = L-methionyl-(S)-S-oxide-[protein] + [thioredoxin]-dithiol. The enzyme catalyses [thioredoxin]-disulfide + L-methionine + H2O = L-methionine (S)-S-oxide + [thioredoxin]-dithiol. Has an important function as a repair enzyme for proteins that have been inactivated by oxidation. Catalyzes the reversible oxidation-reduction of methionine sulfoxide in proteins to methionine. The protein is Peptide methionine sulfoxide reductase MsrA of Yersinia pseudotuberculosis serotype O:1b (strain IP 31758).